The chain runs to 228 residues: 2,3-bisphosphoglycerate-dependent phosphoglycerate mutase (228 aa).

Residues R8–N15, T21–G22, R60, E87–Y90, K98, R114–R115, and G180–N181 contribute to the substrate site. The active-site Tele-phosphohistidine intermediate is H9. E87 acts as the Proton donor/acceptor in catalysis.

The protein belongs to the phosphoglycerate mutase family. BPG-dependent PGAM subfamily. As to quaternary structure, homodimer.

It catalyses the reaction (2R)-2-phosphoglycerate = (2R)-3-phosphoglycerate. It functions in the pathway carbohydrate degradation; glycolysis; pyruvate from D-glyceraldehyde 3-phosphate: step 3/5. Its function is as follows. Catalyzes the interconversion of 2-phosphoglycerate and 3-phosphoglycerate. The sequence is that of 2,3-bisphosphoglycerate-dependent phosphoglycerate mutase from Novosphingobium aromaticivorans (strain ATCC 700278 / DSM 12444 / CCUG 56034 / CIP 105152 / NBRC 16084 / F199).